The primary structure comprises 339 residues: Aspartate carbamoyltransferase catalytic subunit (339 aa).

Residues Arg60 and Thr61 each coordinate carbamoyl phosphate. Lys88 provides a ligand contact to L-aspartate. The carbamoyl phosphate site is built by Arg110, His143, and Gln146. Residues Arg183 and Arg254 each coordinate L-aspartate. Carbamoyl phosphate is bound by residues Gly295 and Pro296.

The protein belongs to the aspartate/ornithine carbamoyltransferase superfamily. ATCase family. Heterododecamer (2C3:3R2) of six catalytic PyrB chains organized as two trimers (C3), and six regulatory PyrI chains organized as three dimers (R2).

It carries out the reaction carbamoyl phosphate + L-aspartate = N-carbamoyl-L-aspartate + phosphate + H(+). Its pathway is pyrimidine metabolism; UMP biosynthesis via de novo pathway; (S)-dihydroorotate from bicarbonate: step 2/3. Its function is as follows. Catalyzes the condensation of carbamoyl phosphate and aspartate to form carbamoyl aspartate and inorganic phosphate, the committed step in the de novo pyrimidine nucleotide biosynthesis pathway. This is Aspartate carbamoyltransferase catalytic subunit from Prochlorococcus marinus (strain MIT 9312).